Here is a 1150-residue protein sequence, read N- to C-terminus: C5a peptidase (1150 aa).

An N-terminal signal peptide occupies residues 1–31 (MRKKQKLPFDKLAIALMSTSILLNAQSDIKA). Positions 33-73 (TVTEDTPAAEQAVETPQPTAVSEEVPSSKETKTPQTPDNAE) are disordered. Residues 99 to 581 (KATIRDLNDP…AGAVDAKKAS (483 aa)) form the Peptidase S8 domain. Residues Asp130, His193, and Ser512 each act as charge relay system in the active site. Basic and acidic residues-rich tracts occupy residues 1029–1054 (EGHS…KPEQ) and 1061–1073 (PDKK…EKDS). Residues 1029 to 1116 (EGHSNKPEQD…RDQLPTTNDK (88 aa)) form a disordered region. Tandem repeats lie at residues 1034 to 1050 (KPEQ…KPEA), 1051 to 1067 (KPEQ…KPET), and 1068 to 1084 (KPEK…TPQK). Residues 1034–1084 (KPEQDGSDQAPDKKPEAKPEQDGSGQTPDKKPETKPEKDSSGQTPGKTPQK) are 3 X 17 AA tandem repeats. Polar residues predominate over residues 1075-1089 (GQTPGKTPQKGQPSR). Positions 1110–1114 (LPTTN) match the LPXTG sorting signal motif. Thr1113 carries the post-translational modification Pentaglycyl murein peptidoglycan amidated threonine. A propeptide spans 1114-1150 (NDKDTNRLHLLKLVMTTFFFGLVAHIFKTKRQKETKK) (removed by sortase).

Belongs to the peptidase S8 family. In terms of processing, cleaved by SpeB protease; leading to its degradation. Degradation by SpeB is probably strictly regulated to preserve integrity of C5a peptidase.

The protein resides in the secreted. The protein localises to the cell wall. It carries out the reaction The primary cleavage site is at 67-His-|-Lys-68 in human C5a with a minor secondary cleavage site at 58-Ala-|-Ser-59.. This virulence factor of S.pyogenes specifically cleaves the human serum chemotaxin C5a at '68-Lys-|-Asp-69' bond near its C-terminus, destroying its ability to serve as a chemoattractant. This is C5a peptidase (scpA) from Streptococcus pyogenes serotype M18 (strain MGAS8232).